Here is a 78-residue protein sequence, read N- to C-terminus: Transmembrane protein 258 (78 aa).

The Cytoplasmic portion of the chain corresponds to 1–18 (MDVMQRYVSPVNPAVFPH). The helical transmembrane segment at 19 to 39 (LATVLLVIGTFFTAWFFIFVV) threads the bilayer. Residues 40–53 (SRKSSKESTLIKEL) lie on the Cytoplasmic side of the membrane. Residues 54–74 (LISLCASIFLGFGIVFLLLTV) form a helical membrane-spanning segment. Topologically, residues 75–78 (GIYV) are perinuclear space.

Belongs to the OST5 family. As to quaternary structure, homodimer. Component of the oligosaccharyltransferase (OST) complex. Interacts with klar and Msp300, components of LINC complex.

It localises to the nucleus outer membrane. The protein localises to the cytoplasm. It is found in the endoplasmic reticulum membrane. Subunit of the oligosaccharyl transferase (OST) complex that catalyzes the initial transfer of a defined glycan (Glc(3)Man(9)GlcNAc(2) in eukaryotes) from the lipid carrier dolichol-pyrophosphate to an asparagine residue within an Asn-X-Ser/Thr consensus motif in nascent polypeptide chains, the first step in protein N-glycosylation. N-glycosylation occurs cotranslationally and the complex associates with the Sec61 complex at the channel-forming translocon complex that mediates protein translocation across the endoplasmic reticulum (ER). All subunits are required for a maximal enzyme activity. In addition may regulates nuclear envelope (NE) architecture and nuclear positioning through the linker of nucleoskeleton and cytoskeleton (LINC)-dependent and -independent mechanisms. In Drosophila melanogaster (Fruit fly), this protein is Transmembrane protein 258.